The following is a 189-amino-acid chain: Density-regulated protein homolog (189 aa).

The region spanning 105–172 is the SUI1 domain; sequence ICVSRAARGK…DLFDVIPEKW (68 aa).

This sequence belongs to the DENR family. As to quaternary structure, interacts with MCTS1.

Its function is as follows. Regulates translation as part of a complex with MCTS1. Specifically required for translational re-initiation in mRNAs containing upstream open reading frames (uORFs). Not required for standard translational initiation. Regulates expression of a subset of gene products including mbc, InR and EcR. The sequence is that of Density-regulated protein homolog from Drosophila melanogaster (Fruit fly).